A 295-amino-acid chain; its full sequence is MVDATSPPGVNAVVNYYVPNSDGSPPATNDMAVMLGQKDMISHKMRIRDLRPYKEEYSLDRNGFQYATIHSTLTDATDETQIKEVYYREIEKLVQDITGAKRVLAFHHAVRTRTGNEFGEQIKDRYQGVEGPAYRVHIDQTPQGALSIVQFMFPDLADDVRNGSFQVINVWRPLTRVQRDPLMVADAAEMPPEDLLLISRKYYNGLHSSNFVIKYDGRMAAGEGPTDGLSGDGKHSWWYIGDQEPTEALVFSSSGFRNGKAIIGTAHDLYSAEPMINAYERKNASSLYGHDESQI.

It belongs to the asaB hydroxylase/desaturase family.

It participates in secondary metabolite biosynthesis; terpenoid biosynthesis. Functionally, oxidoreductase; part of the gene cluster that mediates the biosynthesis of the diterpene ent-pimara-8(14),15-diene (PD). Within the cluster, the HMG-CoA reductase AN1593 functions in the mevalonate pathway, which produces isoprenoid precursors. The geranylgeranyl pyrophosphate (GGPP) synthase AN1592 is needed in the formation of GGPP, the precursor for diterpenes. Lastly, the pimaradiene synthase pbcA performs the 2 cyclization steps that convert GGPP to ent-pimara-8(14),15-diene. The putative roles of the remaining cluster enzymes in ent-pimara-8(14),15-diene biosynthesis is unclear. The cytochrome P450 monooxygenase AN1598, the glutathione S-transferase AN1595, the oxidoreductases AN1596 and AN1597 probably function as decorative enzymes. It is possible that in biological conditions the compound is oxidized to ent-pimara-8(14),15-dien-19-oic acid, which is a bioactive diterpene compound predominant in many plant extracts. This chain is Oxidoreductase AN1597, found in Emericella nidulans (strain FGSC A4 / ATCC 38163 / CBS 112.46 / NRRL 194 / M139) (Aspergillus nidulans).